A 558-amino-acid chain; its full sequence is Receptor-like kinase LIP2 (558 aa).

The disordered stretch occupies residues 1 to 45 (MHCFPCFSSPKNKKSSTTNETNDNNEPKPDDRRRAEETEEIEQSE). The segment covering 15-24 (SSTTNETNDN) has biased composition (low complexity). Residues 25–36 (NEPKPDDRRRAE) show a composition bias toward basic and acidic residues. Residue T53 is modified to Phosphothreonine. Residues 64 to 343 (FRQECLLGEG…SDVMVALSFL (280 aa)) form the Protein kinase domain. ATP is bound by residues 70–78 (LGEGGFGRV) and K93. Phosphotyrosine is present on Y138. The Proton acceptor role is filled by D191. S195 and S227 each carry phosphoserine. T233 carries the phosphothreonine modification. Y241 carries the phosphotyrosine modification. The segment at 372–558 (HDSNLVSPPP…SDVAIDSIKE (187 aa)) is disordered. Residues 401-418 (ESEKESVSKNEYKKKHEE) show a composition bias toward basic and acidic residues. Over residues 419–431 (EDSSMESDDESDS) the composition is skewed to acidic residues. Over residues 432 to 448 (NSEHEKDQPPKPIDEKN) the composition is skewed to basic and acidic residues. The segment covering 473–486 (SKSSQKSNDESTSS) has biased composition (low complexity). Composition is skewed to basic and acidic residues over residues 488–500 (YDSDRDQDEKGKE), 508–524 (EEKHTHIEHIDSSKTDD), and 547–558 (IKSDVAIDSIKE).

Belongs to the protein kinase superfamily. Ser/Thr protein kinase family. As to quaternary structure, interacts with PRK6. Palmitoylated. As to expression, expressed in mature pollen and in germinating pollen tubes.

The protein localises to the cell membrane. Involved in pollen tube guidance into micropyle. Participates in perception of the ovule-secreted peptide signal LURE1. This Arabidopsis thaliana (Mouse-ear cress) protein is Receptor-like kinase LIP2.